A 193-amino-acid chain; its full sequence is nitroreductase FRM2 (193 aa).

It belongs to the nitroreductase family. Requires FMN as cofactor.

The protein resides in the cytoplasm. Its subcellular location is the nucleus. It catalyses the reaction 4-(hydroxyamino)quinoline N-oxide + 2 NAD(+) + H2O = 4-nitroquinoline N-oxide + 2 NADH + 2 H(+). Type II nitroreductase, able to reduce 4-nitroquinoline N-oxide (4-NQO) into 4-aminoquinoline-N-oxide (4-AQO) via 4-hydroxyaminoquinoline (4-HAQO), using NADH as reductant. involved in the oxidative stress response. Plays a possible role in the metal stress response. Involved in negative regulation of fatty acid metabolism. This is nitroreductase FRM2 from Saccharomyces cerevisiae (strain ATCC 204508 / S288c) (Baker's yeast).